Here is a 511-residue protein sequence, read N- to C-terminus: Cytochrome P450 monooxygenase esdpI (511 aa).

A helical membrane pass occupies residues 14–34 (VRAGLAIGVAILAIIVLFPGI). A heme-binding site is contributed by Cys453.

The protein belongs to the cytochrome P450 family. Heme is required as a cofactor.

Its subcellular location is the membrane. The protein operates within secondary metabolite biosynthesis; terpenoid biosynthesis. Its function is as follows. Cytochrome P450 monooxygenase; part of the cluster that mediates the biosynthesis of shearones, diterpenoid pyrones (DPs) which are structurally diverse meroterpenoids consisting of a diterpene linked by a pyrone, and which may exhibit a range of bioactivities. Whitin the pathway, esdpI takes part in the molecular scaffold modification via the hydroxylation at C-20 and can transform shearone C into shearone G. The molecular scaffold is commonly biosynthesized by a series of enzymes including the non-reducing polyketide synthase (NR-PKS) esdpA that generates an alpha-pyrone; the prenyltransferase esdpC that attaches a geranylgeranyl pyrophosphate (GGPP) produced by the GGPP synthase (GGPPS) esdpD onto the pyrone unit; the FAD-dependent monooxygenase esdpE that converts an olefin on the diterpene unit into an epoxide; and the terpene cyclase esdpB that catalyzes the cyclization reactions to give the molecular backbone shearone A. In the modification steps, esdpF oxidizes the hydroxy group to a ketone at C-3 and esdpG then attaches hydroxy groups at both C-11 and C-12. After that, esdpI hydroxylates at C-20 and esdpH hydroxylates at C-6'. The ether bridge is generated by nucleophilic attack of the hydroxy group at C-20 to the carbonyl carbon at C-3. EsdpH can also functions prior to esdpI. The different combinations of these modification enzymes lead to the production of diverse shearone derivatives, shearone I being the end product of the pathway. The alpha-ketoglutarate-dependent dioxygenase esdpJ seems not to be involved in this pathway. This chain is Cytochrome P450 monooxygenase esdpI, found in Penicillium shearii (Eupenicillium shearii).